The chain runs to 416 residues: Phakinin (416 aa).

Residues 1-48 (MSERRVAMDLPSGSNASMPLQRHRVSSLRGTRSPSSLDSPPASRTSAV) form a disordered region. At Ser-2 the chain carries N-acetylserine. The tract at residues 2-115 (SERRVAMDLP…HATAEDLGGC (114 aa)) is head. 4 positions are modified to phosphoserine: Ser-27, Ser-33, Ser-36, and Ser-91. Positions 28 to 48 (LRGTRSPSSLDSPPASRTSAV) are enriched in polar residues. The IF rod domain occupies 105–416 (NHATAEDLGG…HALLDREESN (312 aa)). Coiled-coil stretches lie at residues 199 to 240 (FRKA…SLSR) and 314 to 391 (LAAA…ERAH). The interval 397-416 (GQLQKDVASYHALLDREESN) is tail.

Belongs to the intermediate filament family. In terms of assembly, part of a complex required for lens intermediate filament formation composed of BFSP1, BFSP2, and CRYAA. Found in a complex composed of PPL (via C-terminal linker domain), BFSP1 and BFSP2 in the retinal lens. Within the complex interacts with PPL (via C-terminal linker domain) and with BFSP1. Identified in a complex that contains VIM, EZR, AHNAK, BFSP1, BFSP2, ANK2, PLEC, PRX and spectrin. Interacts with LGSN. Interacts with VIM. As to expression, expressed in the deep and shallow cortices of the retina lens (at protein level).

It is found in the cell membrane. Its subcellular location is the cytoplasm. It localises to the cytoskeleton. The protein resides in the cell cortex. Required for the correct formation of lens intermediate filaments as part of a complex composed of BFSP1, BFSP2 and CRYAA. Plays a role in maintenance of retinal lens optical clarity. In Rattus norvegicus (Rat), this protein is Phakinin.